The primary structure comprises 277 residues: MQPYLDLMRQLLEHGTVKSDRTGTGTRSLFGHQMRFDLSKGFPLVTTKKLHLKSIIHELLWFLKGETNIAYLKDNGVRIWDEWATEDGELGPVYGRQWRAWPTPDGRHIDQISQVVEQIRTRPDSRRLIVSAWNVAELPDEGISPKDNARAGRMALAPCHTFFQFYVADGRLSCQLYQRSADVFLGVPFNIASYALLTLMVAQVTDLEPGDFVHTFGDVHLYSNHVEQAKEQLSREPYPLPKMHLNPEVKSLFDFRYEDFTLEGYQAHPHIKAPVAI.

DUMP is bound at residue arginine 21. Histidine 51 serves as a coordination point for (6R)-5,10-methylene-5,6,7,8-tetrahydrofolate. 126–127 contacts dUMP; sequence RR. The active-site Nucleophile is cysteine 159. Residues 179 to 182, asparagine 190, and 220 to 222 each bind dUMP; these read RSAD and HLY. Aspartate 182 contributes to the (6R)-5,10-methylene-5,6,7,8-tetrahydrofolate binding site. Alanine 276 lines the (6R)-5,10-methylene-5,6,7,8-tetrahydrofolate pocket.

It belongs to the thymidylate synthase family. Bacterial-type ThyA subfamily. Homodimer.

Its subcellular location is the cytoplasm. It catalyses the reaction dUMP + (6R)-5,10-methylene-5,6,7,8-tetrahydrofolate = 7,8-dihydrofolate + dTMP. It participates in pyrimidine metabolism; dTTP biosynthesis. Catalyzes the reductive methylation of 2'-deoxyuridine-5'-monophosphate (dUMP) to 2'-deoxythymidine-5'-monophosphate (dTMP) while utilizing 5,10-methylenetetrahydrofolate (mTHF) as the methyl donor and reductant in the reaction, yielding dihydrofolate (DHF) as a by-product. This enzymatic reaction provides an intracellular de novo source of dTMP, an essential precursor for DNA biosynthesis. This chain is Thymidylate synthase, found in Thioalkalivibrio sulfidiphilus (strain HL-EbGR7).